The sequence spans 837 residues: MTTAVQPSDTTGFGGGPAGSRASDLIQFQEIMSESAESSSSSSQTNVSAANTLPRESNGQNYADDPSHVYTNIREIEELNSRPVPPTPRADAQPRRDLLNGWFEYETDVGRTFFFNKETGKSQWIPPRFIRTPAQVQEFLRATRTNLDTTCSFQGSSTSSSEEQKENKMRESLADDDRKSQLIEDEEVFDEVCDDVDEQSSPVIDLQSRPLPIPFSDSFTDDEDEDDVKPIEGSIASDSDFDEEPVPTSSRKASTASGVMMPHPYAHVSSFQSTFPRAKNEDTDKLASYVIPPDANETSKTPTAIRVRRPSPTNLRSVSFQNKCTVLKNVPMPQVLPTTSSSFDHHPQYHSNTPDRPILMEDSADFTPSSRCEERRGSGDGREPVRTIRCGDLERSENDEPAEKVVKPKKREWITNYMYLTTAHLILYKDQKSAEKHGKHYDAPQGVWDLRGASVTWYQDNRDVQKKKQRKYIQLELCNTKKYLLRGPNDTEAVEWYKSLEEVVAKLPSPGSSNQPMIDVTNGVARNPSYIGSTRPLSHALIPISRSMRRRDDPMSQSAIETVSTSVSTDEPRPSKETIIEKLRRFFRTRPTVESLKEKGIYKPEPVFGSTLSAICQHENSLVPKFIRVITEVIESKGLETDGIYRVSGNLSAVQKIRCQADQDNYKALVSEEDIHVLTGALKLFFRELTDPLFPISLHKEYTSAMQMPNATTRFKKFEELLSRLPNENRETLKMLLRHLNRVASHSSQNRMQQHNLAIVFGPTLFHNGDGAVNLATKNKKAGKKAKPSKKEETQATPVQSNSHLAFSMIMQSQIVQYLLESANKFDILKAPVNIGR.

Polar residues predominate over residues 1–11; the sequence is MTTAVQPSDTT. The disordered stretch occupies residues 1–66; sequence MTTAVQPSDT…SNGQNYADDP (66 aa). The span at 33-43 shows a compositional bias: low complexity; sequence SESAESSSSSS. Polar residues predominate over residues 44–61; that stretch reads QTNVSAANTLPRESNGQN. A WW domain is found at 96-129; sequence RDLLNGWFEYETDVGRTFFFNKETGKSQWIPPRF. Positions 150 to 161 are enriched in low complexity; it reads TCSFQGSSTSSS. Disordered stretches follow at residues 150–181, 194–257, 338–403, 548–574, and 778–800; these read TCSF…RKSQ, DDVD…STAS, TTSS…EPAE, MRRR…EPRP, and KNKK…TPVQ. Residues 162-181 show a composition bias toward basic and acidic residues; that stretch reads EEQKENKMRESLADDDRKSQ. Polar residues predominate over residues 247–257; it reads PTSSRKASTAS. The segment covering 371–403 has biased composition (basic and acidic residues); sequence RCEERRGSGDGREPVRTIRCGDLERSENDEPAE. Residues 386–505 enclose the PH domain; it reads RTIRCGDLER…WYKSLEEVVA (120 aa). Residues 556 to 569 show a composition bias toward polar residues; the sequence is SQSAIETVSTSVST. The Rho-GAP domain occupies 610 to 827; the sequence is STLSAICQHE…YLLESANKFD (218 aa). The span at 778–788 shows a compositional bias: basic residues; that stretch reads KNKKAGKKAKP.

In Caenorhabditis elegans, this protein is WW domain-containing protein tag-325 (tag-325).